Consider the following 469-residue polypeptide: Uronate isomerase (469 aa).

The protein belongs to the metallo-dependent hydrolases superfamily. Uronate isomerase family.

The catalysed reaction is D-glucuronate = D-fructuronate. It catalyses the reaction aldehydo-D-galacturonate = keto-D-tagaturonate. It participates in carbohydrate metabolism; pentose and glucuronate interconversion. The protein is Uronate isomerase of Yersinia enterocolitica serotype O:8 / biotype 1B (strain NCTC 13174 / 8081).